The primary structure comprises 362 residues: Major capsid protein VP1 (362 aa).

Residues 5–19 (KRKGECPGAAPKKPK) carry the Bipartite nuclear localization signal motif. T338 is subject to Phosphothreonine; by host.

It belongs to the polyomaviruses coat protein VP1 family. As to quaternary structure, homomultimer; disulfide-linked. The virus capsid is composed of 72 icosahedral units, each one composed of five disulfide-linked copies of VP1. Interacts with minor capsid proteins VP2 and VP3.

The protein localises to the virion. Its subcellular location is the host nucleus. In terms of biological role, forms an icosahedral capsid with a T=7 symmetry and a 40 nm diameter. The capsid is composed of 72 pentamers linked to each other by disulfide bonds and associated with VP2 or VP3 proteins. Interacts with sialic acids on the cell surface to provide virion attachment to target cell. Once attached, the virion is internalized by endocytosis and traffics to the endoplasmic reticulum. Inside the endoplasmic reticulum, the protein folding machinery isomerizes VP1 interpentamer disulfide bonds, thereby triggering initial uncoating. Next, the virion uses the endoplasmic reticulum-associated degradation machinery to probably translocate in the cytosol before reaching the nucleus. Nuclear entry of the viral DNA involves the selective exposure and importin recognition of VP2/Vp3 nuclear localization signal. In late phase of infection, neo-synthesized VP1 encapsulates replicated genomic DNA in the nucleus, and participates in rearranging nucleosomes around the viral DNA. In Simian virus 12 (strain wt100) (SV-12), this protein is Major capsid protein VP1.